The sequence spans 1298 residues: DNA repair protein rad-50 (1298 aa).

Arg13, Asn38, Gly39, Gly41, Lys42, Thr43, Thr44, Ile66, and Gln158 together coordinate ATP. Mg(2+) is bound at residue Thr43. Residue Gln158 coordinates Mg(2+). Coiled-coil stretches lie at residues 222–291, 317–598, and 622–660; these read ARQN…IRVE, EERA…QYRK, and AEEV…IEES. Residues 622 to 719 form the Zinc-hook domain; sequence AEEVSEKLEN…EEIIIVKAEG (98 aa). Cys666 and Cys669 together coordinate Zn(2+). Coiled-coil stretches lie at residues 691–719 and 754–1092; these read LSFP…KAEG and KNEK…KESI.

The protein belongs to the SMC family. RAD50 subfamily. In terms of assembly, component of the MRN complex composed of two heterodimers rad-50 and mre-11 associated with a single nbs-1. Requires Zn(2+) as cofactor.

It is found in the nucleus. The protein resides in the chromosome. It carries out the reaction ATP + H2O = ADP + phosphate + H(+). In terms of biological role, component of the MRN complex, which plays a central role in double-strand break (DSB) repair, DNA recombination, maintenance of telomere integrity and meiosis. The MRN complex is involved in the repair of DNA double-strand breaks (DSBs) via homologous recombination (HR), an error-free mechanism which primarily occurs during S and G2 phases. The complex (1) mediates the end resection of damaged DNA, which generates proper single-stranded DNA, a key initial steps in HR, and is (2) required for the recruitment of other repair factors and efficient activation of ATM and ATR upon DNA damage. The MRN complex possesses single-strand endonuclease activity and double-strand-specific 3'-5' exonuclease activity, which are provided by mre-11, to initiate end resection, which is required for single-strand invasion and recombination. Within the complex, rad-50 is both required to bind DNA ends and hold them in close proximity and regulate the activity of mre-11. Rad-50 provides an ATP-dependent control of mre-11 by positioning DNA ends into the mre-11 active site: ATP-binding induces a large structural change from an open form with accessible mre-11 nuclease sites into a closed form. The sequence is that of DNA repair protein rad-50 (rad-50) from Caenorhabditis elegans.